The chain runs to 394 residues: UDP-glucose 6-dehydrogenase (394 aa).

Residues 2–19 (KIAI…AVLL), V11, D29, K34, T83, T118, and E145 each bind NAD(+). Residues 141–145 (EFLRE), K203, N207, 248–252 (YNNPS), and G256 each bind substrate. Residue Y258 coordinates NAD(+). C259 (nucleophile) is an active-site residue. Residue K262 participates in NAD(+) binding. A substrate-binding site is contributed by K313. Residue R320 coordinates NAD(+).

The protein belongs to the UDP-glucose/GDP-mannose dehydrogenase family.

It catalyses the reaction UDP-alpha-D-glucose + 2 NAD(+) + H2O = UDP-alpha-D-glucuronate + 2 NADH + 3 H(+). Its pathway is nucleotide-sugar biosynthesis; UDP-alpha-D-glucuronate biosynthesis; UDP-alpha-D-glucuronate from UDP-alpha-D-glucose: step 1/1. Functionally, catalyzes the formation of UDP-glucuronic acid which is required for capsular hyaluronic acid synthesis. Directly responsible for the transformation of some unencapsulated serotype-3 SP mutants to the encapsulated phenotype. This is UDP-glucose 6-dehydrogenase (cap3A) from Streptococcus pneumoniae.